The following is a 98-amino-acid chain: NADH-ubiquinone oxidoreductase chain 4L (98 aa).

3 helical membrane-spanning segments follow: residues 1 to 21 (MSLV…GLLM), 29 to 49 (ALLC…ITIL), and 59 to 79 (TPII…ALLV).

This sequence belongs to the complex I subunit 4L family. Core subunit of respiratory chain NADH dehydrogenase (Complex I) which is composed of 45 different subunits.

Its subcellular location is the mitochondrion inner membrane. The enzyme catalyses a ubiquinone + NADH + 5 H(+)(in) = a ubiquinol + NAD(+) + 4 H(+)(out). Functionally, core subunit of the mitochondrial membrane respiratory chain NADH dehydrogenase (Complex I) which catalyzes electron transfer from NADH through the respiratory chain, using ubiquinone as an electron acceptor. Part of the enzyme membrane arm which is embedded in the lipid bilayer and involved in proton translocation. The protein is NADH-ubiquinone oxidoreductase chain 4L (MT-ND4L) of Lipotes vexillifer (Yangtze river dolphin).